The following is a 468-amino-acid chain: UDP-N-acetylmuramate--L-alanine ligase (468 aa).

Glycine 118–threonine 124 is an ATP binding site.

Belongs to the MurCDEF family.

The protein localises to the cytoplasm. It carries out the reaction UDP-N-acetyl-alpha-D-muramate + L-alanine + ATP = UDP-N-acetyl-alpha-D-muramoyl-L-alanine + ADP + phosphate + H(+). Its pathway is cell wall biogenesis; peptidoglycan biosynthesis. Cell wall formation. This Roseobacter denitrificans (strain ATCC 33942 / OCh 114) (Erythrobacter sp. (strain OCh 114)) protein is UDP-N-acetylmuramate--L-alanine ligase.